The sequence spans 135 residues: Sex-regulated protein janus-A (135 aa).

Lysine 37 is a binding site for substrate. Histidine 63 serves as the catalytic Proton acceptor. Substrate is bound at residue serine 104–glycine 106.

Belongs to the janus family.

JanA and janB regulate somatic sex differentiation. The polypeptide is Sex-regulated protein janus-A (janA) (Drosophila simulans (Fruit fly)).